The chain runs to 295 residues: Ribosomal protein L11 methyltransferase (295 aa).

S-adenosyl-L-methionine-binding residues include threonine 146, glycine 167, aspartate 189, and asparagine 231.

This sequence belongs to the methyltransferase superfamily. PrmA family.

The protein resides in the cytoplasm. The catalysed reaction is L-lysyl-[protein] + 3 S-adenosyl-L-methionine = N(6),N(6),N(6)-trimethyl-L-lysyl-[protein] + 3 S-adenosyl-L-homocysteine + 3 H(+). Methylates ribosomal protein L11. This is Ribosomal protein L11 methyltransferase from Vibrio cholerae serotype O1 (strain ATCC 39541 / Classical Ogawa 395 / O395).